A 146-amino-acid polypeptide reads, in one-letter code: Dihydroneopterin aldolase 1 (146 aa).

Substrate-binding positions include glutamate 41, tyrosine 73, and leucine 92–glutamate 93. Residue lysine 119 is the Proton donor/acceptor of the active site.

It belongs to the DHNA family. In terms of assembly, homooctamer. Forms a hollow cylinder assembled from two ring-shaped tetramers. In terms of tissue distribution, expressed in roots, leaves, stems and siliques.

It catalyses the reaction 7,8-dihydroneopterin = 6-hydroxymethyl-7,8-dihydropterin + glycolaldehyde. Its pathway is cofactor biosynthesis; tetrahydrofolate biosynthesis; 2-amino-4-hydroxy-6-hydroxymethyl-7,8-dihydropteridine diphosphate from 7,8-dihydroneopterin triphosphate: step 3/4. Functionally, catalyzes the conversion of 7,8-dihydroneopterin into 6-hydroxymethyl-7,8-dihydropterin, a biosynthetic precursor of the vitamin tetrahydrofolate. Can use L-threo-dihydroneopterin and D-erythro-dihydroneopterin as substrates for the formation of 6-hydroxymethyldihydropterin, but it can also catalyze the epimerization of carbon 2' of dihydroneopterin and dihydromonapterin. In Arabidopsis thaliana (Mouse-ear cress), this protein is Dihydroneopterin aldolase 1.